The primary structure comprises 343 residues: MRN complex-interacting protein (343 aa).

The segment at 75 to 104 is disordered; that stretch reads EETVSASEEENVGHQQAGNVKQQEKSQPSE. The span at 87-104 shows a compositional bias: polar residues; that stretch reads GHQQAGNVKQQEKSQPSE. Phosphoserine occurs at positions 100 and 115. 3 disordered regions span residues 128–178, 193–212, and 230–324; these read SKQP…WGPQ, SPCL…RGPG, and AQFV…AQNP. Residues 148 to 151 carry the Nuclear localization signal (NLS) motif; the sequence is RKRK. Over residues 193-202 the composition is skewed to polar residues; sequence SPCLQENSAD. The segment at 213–237 is necessary for the association with the MRN complex; sequence KELWSPIQQVTATSSKWAQFVLPPR. Residues 240–255 show a composition bias toward basic and acidic residues; it reads SHVDSEQPRSLQRDPR.

It belongs to the MRNIP family. As to quaternary structure, associates with the MRE11-RAD50-NBN (MRN) damage-sensing complex; this association is constitutive. Interacts with MRE11. Interacts with NBN. Interacts with RAD50. Post-translationally, phosphorylated; phosphorylation is constitutive and occurs in the absence of any DNA-damaging stimulus. Phosphorylation on Ser-115 is necessary for its nuclear retention.

It is found in the nucleus. The protein localises to the nucleoplasm. Its function is as follows. Plays a role in the cellular response to DNA damage and the maintenance of genome stability through its association with the MRN damage-sensing complex. Promotes chromatin loading and activity of the MRN complex to facilitate subsequent ATM-mediated DNA damage response signaling and DNA repair. The polypeptide is MRN complex-interacting protein (Homo sapiens (Human)).